Here is a 523-residue protein sequence, read N- to C-terminus: Glycine betaine transporter 1 (523 aa).

12 helical membrane passes run 33-53, 71-91, 109-129, 165-185, 214-234, 251-271, 286-306, 337-357, 372-392, 420-440, 467-487, and 496-516; these read VFGI…VLDA, FDWL…ALIV, SFMS…LMFW, FHWG…LAFF, IVDI…LGLG, GLGL…VSVV, MVVA…ASLG, WTVF…MFIA, VLIV…GLAI, VLPF…VFFI, VFWA…GGSE, and AIST…SLLM.

The protein belongs to the BCCT transporter (TC 2.A.15) family.

The protein resides in the cell inner membrane. Its function is as follows. Involved in the uptake of the osmoprotectant glycine betaine. This chain is Glycine betaine transporter 1, found in Vibrio parahaemolyticus serotype O3:K6 (strain RIMD 2210633).